Reading from the N-terminus, the 228-residue chain is Glucose-induced degradation protein 8 homolog (228 aa).

The LisH domain maps to 29-61 (SKSDLNKLVMNYLVIEGYQEAAAKFQEESSTQT). The CTLH domain maps to 67 to 124 (SIADRMAIRSAIQCGDVEKGIEIVNDLNPEILDTNPQLYFHLQQQKLIELIRKGMTAE).

It belongs to the GID8 family.

It is found in the cytoplasm. Its subcellular location is the nucleus. Functionally, core component of the CTLH E3 ubiquitin-protein ligase complex that mediates ubiquitination and subsequent proteasomal degradation of target proteins. Acts as a positive regulator of Wnt signaling pathway by promoting beta-catenin (CTNNB1) nuclear accumulation. This chain is Glucose-induced degradation protein 8 homolog, found in Dictyostelium discoideum (Social amoeba).